The chain runs to 189 residues: Inner membrane-spanning protein YciB (189 aa).

5 helical membrane passes run 3 to 23 (LLID…WGIY), 47 to 67 (IEPM…ATLL), 76 to 96 (WKPT…QLFF), 121 to 141 (WSWT…AHAF), and 149 to 169 (FKLF…ALYL).

The protein belongs to the YciB family.

It localises to the cell inner membrane. Plays a role in cell envelope biogenesis, maintenance of cell envelope integrity and membrane homeostasis. In Paracidovorax citrulli (strain AAC00-1) (Acidovorax citrulli), this protein is Inner membrane-spanning protein YciB.